We begin with the raw amino-acid sequence, 733 residues long: Fibronectin type III domain-containing protein 7 (733 aa).

The first 25 residues, 1–25 (MAGGRETCLPLIGFILICLKMVASA), serve as a signal peptide directing secretion. 8 consecutive Fibronectin type-III domains span residues 28 to 115 (APEI…TVLA), 116 to 202 (APIL…TSPR), 203 to 288 (APAN…TVAC), 289 to 373 (APGR…TAPC), 374 to 459 (CPSD…TAPC), 460 to 544 (SPEI…TVPC), 545 to 632 (CPTG…CCPL), and 631 to 715 (PLGV…YSVT). N230 is a glycosylation site (N-linked (GlcNAc...) asparagine). Residue N433 is glycosylated (N-linked (GlcNAc...) asparagine).

The protein localises to the secreted. The chain is Fibronectin type III domain-containing protein 7 (FNDC7) from Homo sapiens (Human).